The sequence spans 465 residues: Endo-1,3-1,4-beta-glycanase ExsH (465 aa).

Hemolysin-type calcium-binding repeat units follow at residues 33 to 50 (HGTAGNDSMWGDSSVNVT), 105 to 122 (FGNEADNIIKGGSGTQTI), and 123 to 140 (DGRGGNDVLIGAGGADTF). Residues 206–462 (AHQFRLSLDR…YIKAYSLDAD (257 aa)) form the GH16 domain. The Nucleophile role is filled by Glu349. Glu354 functions as the Proton donor in the catalytic mechanism.

This sequence belongs to the glycosyl hydrolase 16 family.

It localises to the secreted. The protein operates within glycan metabolism; exopolysaccharide biosynthesis. Its function is as follows. Cleaves high molecular weight succinoglycan to yield LMW succinoglycan. Dynamically regulates the molecular weight distribution of succinoglycan by cleaving nascent succinoglycan only during a limited period after its synthesis, perhaps before it undergoes a time-dependent change in its conformation or aggregation state. This is Endo-1,3-1,4-beta-glycanase ExsH (exsH) from Rhizobium meliloti (strain 1021) (Ensifer meliloti).